We begin with the raw amino-acid sequence, 1612 residues long: MAKSSLAGADGALTWVNNAAKKEELETSNKNDSSKKLSVERVYQKKTQLEHILLRPDTYIGSVEPLTQLMWVYDEDVGMNCREVTFVPGLYKIFDEILVNAADNKQRDKNMTCIKVSIDPESNIISIWNNGKGIPVVEHKVEKVYVPALIFGQLLTSSNYDDDEKKVTGGRNGYGAKLCNIFSTKFTVETACKEYKHSFKQTWMNNMMKTSEAKIKHFDGEDYTCITFQPDLAKFKMEKLDKDIVALMTRRAYDLAGSCKGVKVMFNGKKLPVNGFRSYVDLYVKDKLDETGVALKVIHELANERWDVCLTLSEKGFQQISFVNSIATTKGGRHVDYVVDQVVGKLIEVVKKKNKAGVSVKPFQVKNHIWVFINCLIENPTFDSQTKENMTLQPKSFGSKCQLSEKFFKAASNCGIVESILNWVKFKAQTQLNKKCSSVKYSKIKGIPKLDDANDAGGKHSLECTLILTEGDSAKSLAVSGLGVIGRDRYGVFPLRGKILNVREASHKQIMENAEINNIIKIVGLQYKKSYDDAESLKTLRYGKIMIMTDQDQDGSHIKGLLINFIHHNWPSLLKHGFLEEFITPIVKASKNKQELSFYSIPEFDEWKKHIENQKAWKIKYYKGLGTSTAKEAKEYFADMERHRILFRYAGPEDDAAITLAFSKKKIDDRKEWLTNFMEDRRQRRLHGLPEQFLYGTATKHLTYNDFINKELILFSNSDNERSIPSLVDGFKPGQRKVLFTCFKRNDKREVKVAQLAGSVAEMSAYHHGEQALMMTIVNLAQNFVGSNNINLLQPIGQFGTRLHGGKDAASPRYIFTMLSSLARLLFPAVDDNLLKFLYDDNQRVEPEWYIPIIPMVLINGAEGIGTGWACKLPNYDAREIVNNVRRMLDGLDPHPMLPNYKNFKGTIQELGQNQYAVSGEIFVVDRNTVEITELPVRTWTQVYKEQVLEPMLNGTDKTPALISDYKEYHTDTTVKFVVKMTEEKLAQAEAAGLHKVFKLQTTLTCNSMVLFDHMGCLKKYETVQDILKEFFDLRLSYYGLRKEWLVGMLGAESTKLNNQARFILEKIQGKITIENRSKKDLIQMLVQRGYESDPVRAWKEAQEKAAEEEDTQNQHDDSSSDSGTPSGPDFNYILNMSLWSLTKEKVEELIKQRDTKGREVNDLKRKSPSDLWKEDLAAFVEELDKVEAQEREDILAGMSGKAIKGKVGKPKVKKLQLEETMPSPYGRRIVPEITAMKADASRKLLKKKKGDPDTPVVKVEFDEEFSGTPVEGTGEETLTPSAPVNKGPKPKREKKEPGTRVRKTPTSAGKPNAKKVKKRNPWSDDESKSESDLEETEPVVIPRDSLLRRAAAERPKYTFDFSEEEEEDADDDDDNNDLEELKVKASPITNDGEDEFVPSDGLDKDEYAFSPGKSKATPEKSSHDKKSQDFGNLFSFPSYSQKSEDDSAKFDSNEEDTASVFTPSFGLKQTDKVPSKTVAAKKGKPPSDTAPKAKRAPKQKKVVETVNSDSDSEFGIPKKTTTPKGKGRGAKKRKASGSENEGDYNPGRKPSKTASKKPKKTSFDQDSDVDIFPSDFTSEPPALPRTGRARKEVKYFAESDEEEDVDFAMFN.

A2 carries the N-acetylalanine modification. An N6-acetyllysine modification is found at K3. Residues K21 and K22 each participate in a glycyl lysine isopeptide (Lys-Gly) (interchain with G-Cter in SUMO2) cross-link. ATP is bound by residues N100, N129, and 157 to 159 (SSN). Residues K165 and K166 each participate in a glycyl lysine isopeptide (Lys-Gly) (interchain with G-Cter in SUMO2) cross-link. 170–177 (GRNGYGAK) contacts ATP. Residues K216 and K287 each participate in a glycyl lysine isopeptide (Lys-Gly) (interchain with G-Cter in SUMO2) cross-link. The interaction with DNA stretch occupies residues 351-353 (KKK). Glycyl lysine isopeptide (Lys-Gly) (interchain with G-Cter in SUMO2) cross-links involve residues K355 and K361. 385–387 (QTK) contacts ATP. Residues K425, K427, and K434 each participate in a glycyl lysine isopeptide (Lys-Gly) (interchain with G-Cter in SUMO2) cross-link. The 118-residue stretch at 464-581 (CTLILTEGDS…SLLKHGFLEE (118 aa)) folds into the Toprim domain. The Mg(2+) site is built by E470, D550, and D552. Glycyl lysine isopeptide (Lys-Gly) (interchain with G-Cter in SUMO2) cross-links involve residues K588, K593, K623, K631, K634, K664, and K700. The region spanning 724–1177 (IPSLVDGFKP…SPSDLWKEDL (454 aa)) is the Topo IIA-type catalytic domain. Y814 functions as the O-(5'-phospho-DNA)-tyrosine intermediate in the catalytic mechanism. The segment at 999-1008 (KLQTTLTCNS) is interaction with DNA. K1080 is covalently cross-linked (Glycyl lysine isopeptide (Lys-Gly) (interchain with G-Cter in SUMO2)). Residues 1098–1128 (AWKEAQEKAAEEEDTQNQHDDSSSDSGTPSG) are disordered. Residues K1202, K1205, K1214, and K1215 each participate in a glycyl lysine isopeptide (Lys-Gly) (interchain with G-Cter in SUMO2) cross-link. Position 1224 is a phosphoserine (S1224). Residues K1238, K1250, and K1259 each participate in a glycyl lysine isopeptide (Lys-Gly) (interchain with G-Cter in SUMO2) cross-link. Residues 1245–1586 (LLKKKKGDPD…FTSEPPALPR (342 aa)) are disordered. The residue at position 1280 (T1280) is a Phosphothreonine. Glycyl lysine isopeptide (Lys-Gly) (interchain with G-Cter in SUMO2) cross-links involve residues K1311 and K1315. Basic and acidic residues-rich tracts occupy residues 1322–1332 (PWSDDESKSES) and 1346–1358 (SLLR…RPKY). Phosphoserine occurs at positions 1324, 1328, 1330, 1332, and 1346. Residue Y1358 is modified to Phosphotyrosine. Acidic residues predominate over residues 1362–1379 (FSEEEEEDADDDDDNNDL). Position 1363 is a phosphoserine (S1363). K1385 participates in a covalent cross-link: Glycyl lysine isopeptide (Lys-Gly) (interchain with G-Cter in SUMO2). S1387 bears the Phosphoserine mark. The residue at position 1390 (T1390) is a Phosphothreonine. The residue at position 1400 (S1400) is a Phosphoserine. Y1408 carries the post-translational modification Phosphotyrosine. S1411 is modified (phosphoserine). Over residues 1417–1429 (ATPEKSSHDKKSQ) the composition is skewed to basic and acidic residues. K1427 is covalently cross-linked (Glycyl lysine isopeptide (Lys-Gly) (interchain with G-Cter in SUMO2)). Residues S1428, S1439, and S1441 each carry the phosphoserine modification. A Glycyl lysine isopeptide (Lys-Gly) (interchain with G-Cter in SUMO2) cross-link involves residue K1443. The segment covering 1443–1453 (KSEDDSAKFDS) has biased composition (basic and acidic residues). S1448, S1453, and S1460 each carry phosphoserine. A Glycyl lysine isopeptide (Lys-Gly) (interchain with G-Cter in SUMO2) cross-link involves residue K1477. Positions 1493 to 1499 (KAKRAPK) are interaction with PLSCR1. Phosphoserine is present on residues S1509, S1511, and S1513. Residues 1526-1536 (GKGRGAKKRKA) are compositionally biased toward basic residues. A phosphoserine mark is found at S1537 and S1539. Residues 1550 to 1561 (KPSKTASKKPKK) are compositionally biased toward basic residues. T1562 bears the Phosphothreonine mark. 2 positions are modified to phosphoserine: S1563 and S1568. Position 1596 is a phosphotyrosine (Y1596). A Phosphoserine modification is found at S1600.

The protein belongs to the type II topoisomerase family. In terms of assembly, homodimer. Interacts with PLSCR1 and KIAA1210. Mg(2+) is required as a cofactor. Mn(2+) serves as cofactor. The cofactor is Ca(2+).

Its subcellular location is the nucleus. It is found in the nucleolus. It localises to the nucleoplasm. It carries out the reaction ATP-dependent breakage, passage and rejoining of double-stranded DNA.. In terms of biological role, key decatenating enzyme that alters DNA topology by binding to two double-stranded DNA molecules, generating a double-stranded break in one of the strands, passing the intact strand through the broken strand, and religating the broken strand. The sequence is that of DNA topoisomerase 2-beta (TOP2B) from Cricetulus longicaudatus (Long-tailed dwarf hamster).